The sequence spans 352 residues: Phosphoribosylformylglycinamidine cyclo-ligase (352 aa).

This sequence belongs to the AIR synthase family.

Its subcellular location is the cytoplasm. It carries out the reaction 2-formamido-N(1)-(5-O-phospho-beta-D-ribosyl)acetamidine + ATP = 5-amino-1-(5-phospho-beta-D-ribosyl)imidazole + ADP + phosphate + H(+). It participates in purine metabolism; IMP biosynthesis via de novo pathway; 5-amino-1-(5-phospho-D-ribosyl)imidazole from N(2)-formyl-N(1)-(5-phospho-D-ribosyl)glycinamide: step 2/2. The sequence is that of Phosphoribosylformylglycinamidine cyclo-ligase from Pseudomonas putida (strain W619).